The following is a 192-amino-acid chain: MISISDSAQAHFVKLLADQPAGTHIRVFVISPGTSQAECGVSYCPPDAVESDDVELEFNGFNAMVDAKSVAYLEDASIDFVTDQLGSQLTLKAPNAKMRKVSGDAPLVERIEYVIQSEINPQLASHGGNIMLVEVTDDGVAVLQFGGGCNGCSQVDITLKDGIEKQLLDLFTGELTGVRDVTDHQPGAHSYT.

[4Fe-4S] cluster is bound by residues Cys149 and Cys152.

The protein belongs to the NfuA family. Homodimer. [4Fe-4S] cluster is required as a cofactor.

Its function is as follows. Involved in iron-sulfur cluster biogenesis. Binds a 4Fe-4S cluster, can transfer this cluster to apoproteins, and thereby intervenes in the maturation of Fe/S proteins. Could also act as a scaffold/chaperone for damaged Fe/S proteins. This Shewanella denitrificans (strain OS217 / ATCC BAA-1090 / DSM 15013) protein is Fe/S biogenesis protein NfuA.